Here is a 162-residue protein sequence, read N- to C-terminus: NADH-ubiquinone oxidoreductase subunit 8 (162 aa).

2 4Fe-4S ferredoxin-type domains span residues 54–83 (RRYQ…IESE) and 93–122 (TRYD…EGPN). 8 residues coordinate [4Fe-4S] cluster: C63, C66, C69, C73, C102, C105, C108, and C112.

The protein belongs to the complex I 23 kDa subunit family. The cofactor is [4Fe-4S] cluster.

It localises to the mitochondrion. The catalysed reaction is a ubiquinone + NADH + 5 H(+)(in) = a ubiquinol + NAD(+) + 4 H(+)(out). Its function is as follows. Core subunit of the mitochondrial membrane respiratory chain NADH dehydrogenase (Complex I) that is believed to belong to the minimal assembly required for catalysis. Complex I functions in the transfer of electrons from NADH to the respiratory chain. The immediate electron acceptor for the enzyme is believed to be ubiquinone. May donate electrons to ubiquinone. The protein is NADH-ubiquinone oxidoreductase subunit 8 (NAD8) of Reclinomonas americana.